The chain runs to 670 residues: DNA ligase (670 aa).

Residues 32 to 36 (DAEYD), 81 to 82 (SL), and Glu-113 contribute to the NAD(+) site. Lys-115 serves as the catalytic N6-AMP-lysine intermediate. NAD(+)-binding residues include Arg-136, Glu-173, Lys-290, and Lys-314. Residues Cys-408, Cys-411, Cys-426, and Cys-432 each coordinate Zn(2+). The BRCT domain maps to 592–670 (ESDSPFAGKT…EAEMIRLLGE (79 aa)).

Belongs to the NAD-dependent DNA ligase family. LigA subfamily. It depends on Mg(2+) as a cofactor. Requires Mn(2+) as cofactor.

It catalyses the reaction NAD(+) + (deoxyribonucleotide)n-3'-hydroxyl + 5'-phospho-(deoxyribonucleotide)m = (deoxyribonucleotide)n+m + AMP + beta-nicotinamide D-nucleotide.. In terms of biological role, DNA ligase that catalyzes the formation of phosphodiester linkages between 5'-phosphoryl and 3'-hydroxyl groups in double-stranded DNA using NAD as a coenzyme and as the energy source for the reaction. It is essential for DNA replication and repair of damaged DNA. The protein is DNA ligase of Yersinia pestis bv. Antiqua (strain Antiqua).